Here is a 422-residue protein sequence, read N- to C-terminus: 2-(3-amino-3-carboxypropyl)histidine synthase subunit 1 (422 aa).

Residues Cys-128, Cys-234, and Cys-363 each coordinate [4Fe-4S] cluster.

Belongs to the DPH1/DPH2 family. DPH1 subfamily. As to quaternary structure, component of the 2-(3-amino-3-carboxypropyl)histidine synthase complex composed of DPH1, DPH2, DPH3 and a NADH-dependent reductase, predominantly CBR1. The cofactor is [4Fe-4S] cluster.

The protein resides in the cytoplasm. It carries out the reaction L-histidyl-[translation elongation factor 2] + S-adenosyl-L-methionine = 2-[(3S)-amino-3-carboxypropyl]-L-histidyl-[translation elongation factor 2] + S-methyl-5'-thioadenosine + H(+). The protein operates within protein modification; peptidyl-diphthamide biosynthesis. In terms of biological role, catalyzes the first step of diphthamide biosynthesis, a post-translational modification of histidine which occurs in elongation factor 2. DPH1 and DPH2 transfer a 3-amino-3-carboxypropyl (ACP) group from S-adenosyl-L-methionine (SAM) to a histidine residue, the reaction is assisted by a reduction system comprising DPH3 and a NADH-dependent reductase, predominantly CBR1. This Kluyveromyces lactis (strain ATCC 8585 / CBS 2359 / DSM 70799 / NBRC 1267 / NRRL Y-1140 / WM37) (Yeast) protein is 2-(3-amino-3-carboxypropyl)histidine synthase subunit 1 (DPH1).